Reading from the N-terminus, the 185-residue chain is Ribosome-recycling factor (185 aa).

This sequence belongs to the RRF family.

The protein localises to the cytoplasm. Responsible for the release of ribosomes from messenger RNA at the termination of protein biosynthesis. May increase the efficiency of translation by recycling ribosomes from one round of translation to another. This chain is Ribosome-recycling factor, found in Alteromonas mediterranea (strain DSM 17117 / CIP 110805 / LMG 28347 / Deep ecotype).